The sequence spans 467 residues: tRNA dimethylallyltransferase (467 aa).

The N-terminal 47 residues, 1-47 (MASVAAARAVPVGSGLRGLQRTLPLVVILGATGTGKSTLALQLGQRL), are a transit peptide targeting the mitochondrion. A dimethylallyl diphosphate-binding site is contributed by 32 to 37 (TGTGKS). Interaction with substrate tRNA regions lie at residues 55–58 (DSMQ) and 183–187 (RKVAR). The interval 221 to 230 (FSNPCILWLH) is core aggregation region. The segment at 233–255 (QAVLDERLDKRVDDMLAAGLLEE) is interaction with isopentenylpyrophosphate transferase. 2 interaction with substrate tRNA regions span residues 281 to 283 (QSI) and 313 to 331 (ALKQVTKRYARKQNRWVKN). Residues 395 to 425 (HLCDLCDRIIIGDREWAAHIKSKSHLNQLKK) form a Matrin-type zinc finger. The interval 429–467 (LDSDAVNTIESQSVSPDHNKEPKEKGSPGQNDQELKCSV) is disordered. Residues 433 to 444 (AVNTIESQSVSP) are compositionally biased toward polar residues. A Phosphoserine modification is found at S443. Residues 445–454 (DHNKEPKEKG) are compositionally biased toward basic and acidic residues. S455 is modified (phosphoserine).

The protein belongs to the IPP transferase family.

The protein localises to the mitochondrion. Its subcellular location is the cytoplasm. It catalyses the reaction adenosine(37) in tRNA + dimethylallyl diphosphate = N(6)-dimethylallyladenosine(37) in tRNA + diphosphate. Catalyzes the transfer of a dimethylallyl group onto the adenine at position 37 of both cytosolic and mitochondrial tRNAs, leading to the formation of N6-(dimethylallyl)adenosine (i6A37). Mediates modification of a limited subset of tRNAs: tRNA(Ser)(AGA), tRNA(Ser)(CGA), tRNA(Ser)(UGA), as well as partial modification of the selenocysteine tRNA(Ser)(UCA). TRIT1 is therefore required for selenoprotein expression. The protein is tRNA dimethylallyltransferase (TRIT1) of Homo sapiens (Human).